A 525-amino-acid polypeptide reads, in one-letter code: Keratin, type II cytoskeletal 71 (525 aa).

The head stretch occupies residues 1–131 (MSRQFTCKSG…DPEIQKVRAQ (131 aa)). Positions 132 to 167 (EREQIKALNNKFASFIDKVRFLEQQNQVLETKWELL) are coil 1A. The IF rod domain maps to 132-445 (EREQIKALNN…KLLESEECRM (314 aa)). A linker 1 region spans residues 168–186 (QQLDLNNCKNNLEPILEGY). Residues 187–278 (ISNLRKQLET…CLYEAEIAQI (92 aa)) are coil 1B. Residues 279–302 (QSHISDMSVILSMDNNRDLNLDSI) are linker 12. Residues 303 to 441 (IDEVRAQYED…ATYRKLLESE (139 aa)) are coil 2. A tail region spans residues 442–525 (ECRMSGEFPS…LSAPSKKASR (84 aa)). Positions 492 to 525 (VRGGESRSRSSTTDYKDALGKGSSLSAPSKKASR) are disordered. Positions 495 to 510 (GESRSRSSTTDYKDAL) are enriched in basic and acidic residues.

It belongs to the intermediate filament family. Heterodimer of a type I and a type II keratin. Associates with KRT16 and/or KRT17.

It localises to the cytoplasm. Its subcellular location is the cytoskeleton. Plays a central role in hair formation. Essential component of keratin intermediate filaments in the inner root sheath (IRS) of the hair follicle. The polypeptide is Keratin, type II cytoskeletal 71 (KRT71) (Bos taurus (Bovine)).